A 227-amino-acid chain; its full sequence is Large ribosomal subunit protein bL25 (227 aa).

The tract at residues 199 to 227 is disordered; that stretch reads AIAEAQSAEAAEEKAEESAEDEKKDGEEA. Positions 209–227 are enriched in basic and acidic residues; the sequence is AEEKAEESAEDEKKDGEEA.

This sequence belongs to the bacterial ribosomal protein bL25 family. CTC subfamily. As to quaternary structure, part of the 50S ribosomal subunit; part of the 5S rRNA/L5/L18/L25 subcomplex. Contacts the 5S rRNA. Binds to the 5S rRNA independently of L5 and L18.

Functionally, this is one of the proteins that binds to the 5S RNA in the ribosome where it forms part of the central protuberance. In Methylobacterium radiotolerans (strain ATCC 27329 / DSM 1819 / JCM 2831 / NBRC 15690 / NCIMB 10815 / 0-1), this protein is Large ribosomal subunit protein bL25.